We begin with the raw amino-acid sequence, 230 residues long: uncharacterized protein (230 aa).

The signal sequence occupies residues 1-16 (MTCVNVCFFLFPPCHR). 4 helical membrane passes run 27 to 47 (VDLL…IPLI), 118 to 138 (LFFF…FLFF), 150 to 170 (FPIL…LSFL), and 172 to 191 (SLSH…LRVF).

It is found in the cytoplasm. The protein resides in the nucleus membrane. This is an uncharacterized protein from Schizosaccharomyces pombe (strain 972 / ATCC 24843) (Fission yeast).